The following is a 154-amino-acid chain: Endoribonuclease YbeY (154 aa).

Positions 120, 124, and 130 each coordinate Zn(2+).

This sequence belongs to the endoribonuclease YbeY family. Zn(2+) serves as cofactor.

The protein localises to the cytoplasm. In terms of biological role, single strand-specific metallo-endoribonuclease involved in late-stage 70S ribosome quality control and in maturation of the 3' terminus of the 16S rRNA. The sequence is that of Endoribonuclease YbeY from Leptospira biflexa serovar Patoc (strain Patoc 1 / Ames).